We begin with the raw amino-acid sequence, 140 residues long: Large ribosomal subunit protein bL17 (140 aa).

The protein belongs to the bacterial ribosomal protein bL17 family. As to quaternary structure, part of the 50S ribosomal subunit. Contacts protein L32.

The protein is Large ribosomal subunit protein bL17 of Roseobacter denitrificans (strain ATCC 33942 / OCh 114) (Erythrobacter sp. (strain OCh 114)).